The chain runs to 48 residues: Large ribosomal subunit protein bL33B (48 aa).

It belongs to the bacterial ribosomal protein bL33 family.

This chain is Large ribosomal subunit protein bL33B, found in Streptococcus thermophilus (strain CNRZ 1066).